A 177-amino-acid chain; its full sequence is Large ribosomal subunit protein uL6 (177 aa).

The protein belongs to the universal ribosomal protein uL6 family. Part of the 50S ribosomal subunit.

Functionally, this protein binds to the 23S rRNA, and is important in its secondary structure. It is located near the subunit interface in the base of the L7/L12 stalk, and near the tRNA binding site of the peptidyltransferase center. The sequence is that of Large ribosomal subunit protein uL6 from Paracoccus denitrificans (strain Pd 1222).